The following is a 979-amino-acid chain: Pheromone-regulated membrane protein 10 (979 aa).

Disordered regions lie at residues 1 to 279 (MGKS…FFSK), 295 to 318 (LRNVNLHPEADPEKNSVQEAEVDG), 337 to 411 (YSSL…PQRV), 432 to 451 (FSTASSIGEEPAKPSKPLLD), and 491 to 528 (ATKHYPGRKNEEASGSNSELPSFKNTRPKKNKKHLPKF). Positions 15-26 (GGKDARSPETRS) are enriched in basic and acidic residues. The span at 29-38 (SRSSTDNRSS) shows a compositional bias: low complexity. Residues 54-68 (LDLEEGVDDDADFDW) are compositionally biased toward acidic residues. The segment covering 77–86 (DAQSLDNPFN) has biased composition (polar residues). Basic and acidic residues predominate over residues 105–115 (AIERDAVDTIR). Residues 122–135 (EEPDSASDGEDVGM) show a composition bias toward acidic residues. Composition is skewed to basic and acidic residues over residues 138 to 148 (EYQRKRERLVD) and 158 to 175 (SPRRESREGKNVRFHTET). Polar residues predominate over residues 192-213 (EAGTGTNENGEASSSGMKSSIN). Over residues 253 to 263 (GAEKGMKSMKD) the composition is skewed to basic and acidic residues. Low complexity predominate over residues 360-372 (SPSTPSSSPGPES). Positions 379–395 (DDYDFDQVDSDGEDSDL) are enriched in acidic residues. A compositionally biased stretch (polar residues) spans 503–515 (ASGSNSELPSFKN). Residues 516 to 528 (TRPKKNKKHLPKF) show a composition bias toward basic residues. 10 helical membrane passes run 658–678 (WVCVLLYGFCSAMVTPYAFGG), 680–700 (WVNLAVSFFIGTCVGALQFIV), 710–730 (VFEISASIVVSFVGRAFGSIG), 734–754 (ICFGAVTQGSLALILPGYIIL), 773–793 (FYAIIYSLFLSFGITLGAALF), 809–829 (PISPWYRFLFVPAFTIGISLI), 832–852 (AHWIQLPVMVTISCTGYVVTY), 864–884 (FTASLAAFVIGIMGNLYSRVW), 886–906 (GLAVSAMLPAIFVQVPSGVAS), and 946–966 (ITMIQVSIGITVGLFGSSLIV).

This sequence belongs to the ThrE exporter (TC 2.A.79) family.

The protein localises to the membrane. This Zygosaccharomyces rouxii (strain ATCC 2623 / CBS 732 / NBRC 1130 / NCYC 568 / NRRL Y-229) protein is Pheromone-regulated membrane protein 10.